The sequence spans 465 residues: Sensor histidine kinase ZraS (465 aa).

Residues 1–14 are Cytoplasmic-facing; it reads MSFIRLHKDAAAMW. Residues 15 to 35 traverse the membrane as a helical segment; it reads LSRLLPAAIFILVGLFSIMVI. Residues 36–203 lie on the Periplasmic side of the membrane; sequence RDYGRESAAA…ATQAREWRNT (168 aa). Residues 204–224 form a helical membrane-spanning segment; it reads LIVLSALAAVLLATLLAFFWY. Residues 225–465 are Cytoplasmic-facing; sequence QRYQRSHREL…WLPVIARQQD (241 aa). Residues 253–461 form the Histidine kinase domain; that stretch reads GVAHEIRNPL…VFTIWLPVIA (209 aa). The residue at position 256 (H256) is a Phosphohistidine; by autocatalysis.

Post-translationally, autophosphorylated.

It localises to the cell inner membrane. It carries out the reaction ATP + protein L-histidine = ADP + protein N-phospho-L-histidine.. Activity of the ZraS/ZraR two-component system is repressed by the zinc-bound form of ZraP, which probably interacts with the periplasmic region of ZraS. In terms of biological role, part of the Zra signaling pathway, an envelope stress response (ESR) system composed of the periplasmic accessory protein ZraP, the histidine kinase ZraS and the transcriptional regulator ZraR. The ZraPSR system contributes to antibiotic resistance and is important for membrane integrity in the presence of membrane-targeting biocides. ZraS is a member of the two-component regulatory system ZraS/ZraR. Functions as a membrane-associated sensor kinase that phosphorylates ZraR in response to high concentrations of Zn(2+) or Pb(2+) in the medium. The sequence is that of Sensor histidine kinase ZraS (zraS) from Salmonella typhi.